The sequence spans 207 residues: Uridine kinase (207 aa).

11 to 18 (GGSGSGKT) serves as a coordination point for ATP.

It belongs to the uridine kinase family.

Its subcellular location is the cytoplasm. The catalysed reaction is uridine + ATP = UMP + ADP + H(+). It carries out the reaction cytidine + ATP = CMP + ADP + H(+). The protein operates within pyrimidine metabolism; CTP biosynthesis via salvage pathway; CTP from cytidine: step 1/3. Its pathway is pyrimidine metabolism; UMP biosynthesis via salvage pathway; UMP from uridine: step 1/1. This Staphylococcus epidermidis (strain ATCC 35984 / DSM 28319 / BCRC 17069 / CCUG 31568 / BM 3577 / RP62A) protein is Uridine kinase.